We begin with the raw amino-acid sequence, 1050 residues long: Beta-galactosidase (1050 aa).

Residues N100 and D199 each contribute to the substrate site. Residue D199 coordinates Na(+). Mg(2+) is bound by residues E422, H424, and E467. Substrate-binding positions include E467 and 543–546 (EYAH). Catalysis depends on E467, which acts as the Proton donor. Catalysis depends on E543, which acts as the Nucleophile. N603 is a binding site for Mg(2+). Na(+) contacts are provided by F607 and N610. Residues N610 and W1025 each contribute to the substrate site.

It belongs to the glycosyl hydrolase 2 family. Homotetramer. It depends on Mg(2+) as a cofactor. Requires Na(+) as cofactor.

It carries out the reaction Hydrolysis of terminal non-reducing beta-D-galactose residues in beta-D-galactosides.. This Yersinia pestis bv. Antiqua (strain Angola) protein is Beta-galactosidase.